Reading from the N-terminus, the 226-residue chain is Staphylococcal superantigen-like 1 (226 aa).

An N-terminal signal peptide occupies residues 1–30 (MKFKAIAKASLALGMLATGVITSNVQSVQA).

This sequence belongs to the staphylococcal/streptococcal toxin family. Homodimer.

It localises to the secreted. Its function is as follows. Mediates virulence by proteolytically cleaving host proteins, including collagens types I and IV as well as human cytokines IL8, IL17A, and IFN-gamma. The sequence is that of Staphylococcal superantigen-like 1 from Staphylococcus aureus (strain NCTC 8325 / PS 47).